The following is a 268-amino-acid chain: MEPRLLMLGFLSLTIVPSCRAELCLYDPPEVPNATFKALSYKNGTILNCECKRGFRRLKELVYMRCLGNSWSSNCQCTSNSHDKSRKQVTAQLEHQKEQQTTTDMQKPTQSMHQENLTGHCREPPPWKHEDSKRIYHFVEGQSVHYECIPGYKALQRGPAISICKMKCGKTGWTQPQLTCVDEREHHRFLASEESQGSRNSSPESETSCPITTTDFPQPTETTAMTETFVLTMEYKVAVASCLFLLISILLLSGLTWQHRWRKSRRTI.

Positions 1-21 are cleaved as a signal peptide; the sequence is MEPRLLMLGFLSLTIVPSCRA. Residues 22-79 enclose the Sushi 1 domain; sequence ELCLYDPPEVPNATFKALSYKNGTILNCECKRGFRRLKELVYMRCLGNSWSSNCQCTS. The Extracellular segment spans residues 22–236; that stretch reads ELCLYDPPEV…ETFVLTMEYK (215 aa). 3 disulfide bridges follow: cysteine 24/cysteine 66, cysteine 49/cysteine 75, and cysteine 51/cysteine 77. Residues asparagine 33 and asparagine 43 are each glycosylated (N-linked (GlcNAc...) asparagine). The interval 86 to 109 is disordered; that stretch reads RKQVTAQLEHQKEQQTTTDMQKPT. Positions 88 to 109 are enriched in polar residues; that stretch reads QVTAQLEHQKEQQTTTDMQKPT. Residue asparagine 116 is glycosylated (N-linked (GlcNAc...) asparagine). One can recognise a Sushi 2 domain in the interval 119-182; the sequence is GHCREPPPWK…WTQPQLTCVD (64 aa). Disulfide bonds link cysteine 121-cysteine 164 and cysteine 148-cysteine 180. The segment at 189–219 is disordered; that stretch reads FLASEESQGSRNSSPESETSCPITTTDFPQP. Positions 193–211 are enriched in polar residues; the sequence is EESQGSRNSSPESETSCPI. The helical transmembrane segment at 237 to 257 threads the bilayer; it reads VAVASCLFLLISILLLSGLTW. Residues 258-268 are Cytoplasmic-facing; it reads QHRWRKSRRTI.

In terms of assembly, non-covalent dimer of an alpha and a beta subunit. IL2R exists in 3 different forms: a high affinity dimer, an intermediate affinity monomer (beta subunit), and a low affinity monomer (alpha subunit). The high and intermediate affinity forms also associate with a gamma subunit.

The protein resides in the membrane. In terms of biological role, receptor for interleukin-2. The receptor is involved in the regulation of immune tolerance by controlling regulatory T cells (TREGs) activity. TREGs suppress the activation and expansion of autoreactive T-cells. The chain is Interleukin-2 receptor subunit alpha (Il2ra) from Mus musculus (Mouse).